Here is a 118-residue protein sequence, read N- to C-terminus: UPF0102 protein Francci3_3586 (118 aa).

It belongs to the UPF0102 family.

The polypeptide is UPF0102 protein Francci3_3586 (Frankia casuarinae (strain DSM 45818 / CECT 9043 / HFP020203 / CcI3)).